The primary structure comprises 196 residues: Large ribosomal subunit protein uL5 (196 aa).

Belongs to the universal ribosomal protein uL5 family. In terms of assembly, part of the 50S ribosomal subunit; part of the 5S rRNA/L5/L18/L25 subcomplex. Contacts the 5S rRNA and the P site tRNA. Forms a bridge to the 30S subunit in the 70S ribosome.

Functionally, this is one of the proteins that bind and probably mediate the attachment of the 5S RNA into the large ribosomal subunit, where it forms part of the central protuberance. In the 70S ribosome it contacts protein S13 of the 30S subunit (bridge B1b), connecting the 2 subunits; this bridge is implicated in subunit movement. Contacts the P site tRNA; the 5S rRNA and some of its associated proteins might help stabilize positioning of ribosome-bound tRNAs. The chain is Large ribosomal subunit protein uL5 from Rhodopirellula baltica (strain DSM 10527 / NCIMB 13988 / SH1).